The following is a 30-amino-acid chain: Alpha-conotoxin EIVA (30 aa).

3 cysteine pairs are disulfide-bonded: Cys2/Cys16, Cys3/Cys11, and Cys14/Cys24. A 4-hydroxyproline mark is found at Pro7, Pro13, Pro21, Pro22, and Pro27. At Gly30 the chain carries Glycine amide.

In terms of tissue distribution, expressed by the venom duct.

It is found in the secreted. In terms of biological role, alpha-conotoxins act on postsynaptic membranes, they bind to the nicotinic acetylcholine receptors (nAChR) and thus inhibit them. This toxin binds with high affinity to both fetal (alpha-1-beta-1-epsilon-delta (CHRNA1-CHRNB1-CHRND-CHRNE) subunits) and adult (alpha-1/beta-1/gamma/delta subunits) mammalian muscle nicotinic acetylcholine receptors (nAChR). This Conus ermineus (Agate cone) protein is Alpha-conotoxin EIVA.